An 89-amino-acid chain; its full sequence is Small ribosomal subunit protein uS15 (89 aa).

This sequence belongs to the universal ribosomal protein uS15 family. In terms of assembly, part of the 30S ribosomal subunit. Forms a bridge to the 50S subunit in the 70S ribosome, contacting the 23S rRNA.

In terms of biological role, one of the primary rRNA binding proteins, it binds directly to 16S rRNA where it helps nucleate assembly of the platform of the 30S subunit by binding and bridging several RNA helices of the 16S rRNA. Its function is as follows. Forms an intersubunit bridge (bridge B4) with the 23S rRNA of the 50S subunit in the ribosome. This Bartonella tribocorum (strain CIP 105476 / IBS 506) protein is Small ribosomal subunit protein uS15.